The primary structure comprises 553 residues: uncharacterized protein (553 aa).

The SWIB/MDM2 domain maps to 26–109; that stretch reads RFEFVGWGSR…YDLLEKHYKE (84 aa). A Plus3 domain is found at 150-275; that stretch reads AIVSDNIKLL…KAKKLHKDQT (126 aa). Disordered regions lie at residues 335–357 and 447–482; these read QNPE…SESP and PVNN…ETLD. Residues 343-353 show a composition bias toward basic and acidic residues; sequence EAHKSDNEQRL. The span at 447 to 461 shows a compositional bias: polar residues; it reads PVNNVDNGSQVQPNP. Positions 466-480 are enriched in acidic residues; sequence ELSDDDEDDNGDGET. The 55-residue stretch at 497-551 folds into the GYF domain; it reads KLNWLYKDPQGLVQGPFSLTQLKAWSDAEYFTKQFRVWMTGESMESAVLLTDVLR.

This is an uncharacterized protein from Arabidopsis thaliana (Mouse-ear cress).